The primary structure comprises 237 residues: Class B acid phosphatase (237 aa).

The first 25 residues, 1-25 (MRKLTLAFAAASLLFTLNSAVVARA), serve as a signal peptide directing secretion. The Nucleophile role is filled by aspartate 69. Mg(2+)-binding residues include aspartate 69 and aspartate 71. Aspartate 71 acts as the Proton donor in catalysis. Substrate contacts are provided by residues 137–138 (TG) and lysine 177. Aspartate 192 contributes to the Mg(2+) binding site.

This sequence belongs to the class B bacterial acid phosphatase family. As to quaternary structure, homotetramer. Requires Mg(2+) as cofactor.

The protein resides in the periplasm. It catalyses the reaction a phosphate monoester + H2O = an alcohol + phosphate. Functionally, dephosphorylates several organic phosphate monoesters. Also has a phosphotransferase activity catalyzing the transfer of low-energy phosphate groups from organic phosphate monoesters to free hydroxyl groups of various organic compounds. The chain is Class B acid phosphatase from Klebsiella pneumoniae (strain 342).